The primary structure comprises 360 residues: Phosphoserine aminotransferase (360 aa).

An L-glutamate-binding site is contributed by arginine 42. The pyridoxal 5'-phosphate site is built by tryptophan 102, threonine 152, aspartate 171, and glutamine 194. Lysine 195 is subject to N6-(pyridoxal phosphate)lysine. 237-238 (NT) serves as a coordination point for pyridoxal 5'-phosphate.

Belongs to the class-V pyridoxal-phosphate-dependent aminotransferase family. SerC subfamily. In terms of assembly, homodimer. It depends on pyridoxal 5'-phosphate as a cofactor.

It localises to the cytoplasm. It carries out the reaction O-phospho-L-serine + 2-oxoglutarate = 3-phosphooxypyruvate + L-glutamate. The catalysed reaction is 4-(phosphooxy)-L-threonine + 2-oxoglutarate = (R)-3-hydroxy-2-oxo-4-phosphooxybutanoate + L-glutamate. Its pathway is amino-acid biosynthesis; L-serine biosynthesis; L-serine from 3-phospho-D-glycerate: step 2/3. It participates in cofactor biosynthesis; pyridoxine 5'-phosphate biosynthesis; pyridoxine 5'-phosphate from D-erythrose 4-phosphate: step 3/5. Catalyzes the reversible conversion of 3-phosphohydroxypyruvate to phosphoserine and of 3-hydroxy-2-oxo-4-phosphonooxybutanoate to phosphohydroxythreonine. The protein is Phosphoserine aminotransferase of Coxiella burnetii (strain RSA 493 / Nine Mile phase I).